The sequence spans 451 residues: uncharacterized protein (451 aa).

Helical transmembrane passes span 11-31, 56-76, 151-171, 175-195, and 207-227; these read VLLK…YIDL, IQIY…SIGT, IIGI…NIYL, FWLI…LIIF, and VYSV…TIKI. The tract at residues 250-300 is disordered; sequence TKSNNNNNNNNNNKQDDNIIYDTDSSFNGQSSSSSSSSSSSSSSSSSATTT. Composition is skewed to low complexity over residues 253–262 and 280–300; these read NNNNNNNNNN and SSSS…ATTT. The next 2 helical transmembrane spans lie at 392–412 and 413–433; these read FVGV…SDYS and LLTI…LTYL.

The protein localises to the membrane. This is an uncharacterized protein from Dictyostelium discoideum (Social amoeba).